The primary structure comprises 117 residues: MIFIHIIKIKSSFNHFSQSSDGRSNGGGSSSGDSVSTTSDGLLTTGTSPNTSSTSLDGLLTTERTIVSSVLLDFQLLDLSSQRGTITDTVLTSDTNLLSSFSPVFKKEKISKYVSKS.

The tract at residues 16 to 56 (FSQSSDGRSNGGGSSSGDSVSTTSDGLLTTGTSPNTSSTSL) is disordered. Residues 31-56 (SGDSVSTTSDGLLTTGTSPNTSSTSL) show a composition bias toward low complexity.

This is an uncharacterized protein from Saccharomyces cerevisiae (strain ATCC 204508 / S288c) (Baker's yeast).